Consider the following 35-residue polypeptide: Photosystem II reaction center protein M (35 aa).

The helical transmembrane segment at 7–27 threads the bilayer; that stretch reads GFIATILFVLVPTVFLLILYI.

The protein belongs to the PsbM family. As to quaternary structure, PSII is composed of 1 copy each of membrane proteins PsbA, PsbB, PsbC, PsbD, PsbE, PsbF, PsbH, PsbI, PsbJ, PsbK, PsbL, PsbM, PsbT, PsbX, PsbY, PsbZ, Psb30/Ycf12, peripheral proteins PsbO, CyanoQ (PsbQ), PsbU, PsbV and a large number of cofactors. It forms dimeric complexes.

The protein localises to the cellular thylakoid membrane. One of the components of the core complex of photosystem II (PSII). PSII is a light-driven water:plastoquinone oxidoreductase that uses light energy to abstract electrons from H(2)O, generating O(2) and a proton gradient subsequently used for ATP formation. It consists of a core antenna complex that captures photons, and an electron transfer chain that converts photonic excitation into a charge separation. This subunit is found at the monomer-monomer interface. This is Photosystem II reaction center protein M from Crocosphaera subtropica (strain ATCC 51142 / BH68) (Cyanothece sp. (strain ATCC 51142)).